Here is a 544-residue protein sequence, read N- to C-terminus: MSRFTEKMFHNARTATTGMVTGEPHMPVRHTWGEVHERARCIAGGLAAAGVGLGDVVGVLAGFPVEIAPTAQALWMRGASLTMLHQPTPRTDLAVWAEDTMTVIGMIEAKAVIVSEPFLVAIPILEQKGMQVLTVADLLASDPIGPIEVGEDDLALMQLTSGSTGSPKAVQITHRNIYSNAEAMFVGAQYDVDKDVMVSWLPCFHDMGMVGFLTIPMFFGAELVKVTPMDFLRDTLLWAKLIDKYQGTMTAAPNFAYALLAKRLRRQAKPGDFDLSTLRFALSGAEPVEPADVEDLLDAGKPFGLRPSAILPAYGMAETTLAVSFSECNAGLVVDEVDADLLAALRRAVPATKGNTRRLATLGPLLQDLEARIIDEQGDVMPARGVGVIELRGESLTPGYLTMGGFIPAQDEHGWYDTGDLGYLTEEGHVVVCGRVKDVIIMAGRNIYPTDIERAAGRVDGVRPGCAVAVRLDAGHSRESFAVAVESNAFEDPAEVRRIEHQVAHEVVAEVDVRPRNVVVLGPGTIPKTPSGKLRRANSVTLVT.

Lys-528 participates in a covalent cross-link: Isoglutamyl lysine isopeptide (Lys-Gln) (interchain with Q-Cter in protein Pup).

Belongs to the ATP-dependent AMP-binding enzyme family. Post-translationally, pupylated at Lys-528 by the prokaryotic ubiquitin-like protein Pup, which probably leads to its degradation by the proteasome.

The chain is Putative ligase Rv1013 (pks16) from Mycobacterium tuberculosis (strain ATCC 25618 / H37Rv).